Consider the following 178-residue polypeptide: Crossover junction endodeoxyribonuclease RuvC (178 aa).

Residues aspartate 11, glutamate 71, and aspartate 143 contribute to the active site. Residues aspartate 11, glutamate 71, and aspartate 143 each coordinate Mg(2+).

Belongs to the RuvC family. Homodimer which binds Holliday junction (HJ) DNA. The HJ becomes 2-fold symmetrical on binding to RuvC with unstacked arms; it has a different conformation from HJ DNA in complex with RuvA. In the full resolvosome a probable DNA-RuvA(4)-RuvB(12)-RuvC(2) complex forms which resolves the HJ. Mg(2+) serves as cofactor.

The protein localises to the cytoplasm. It carries out the reaction Endonucleolytic cleavage at a junction such as a reciprocal single-stranded crossover between two homologous DNA duplexes (Holliday junction).. In terms of biological role, the RuvA-RuvB-RuvC complex processes Holliday junction (HJ) DNA during genetic recombination and DNA repair. Endonuclease that resolves HJ intermediates. Cleaves cruciform DNA by making single-stranded nicks across the HJ at symmetrical positions within the homologous arms, yielding a 5'-phosphate and a 3'-hydroxyl group; requires a central core of homology in the junction. The consensus cleavage sequence is 5'-(A/T)TT(C/G)-3'. Cleavage occurs on the 3'-side of the TT dinucleotide at the point of strand exchange. HJ branch migration catalyzed by RuvA-RuvB allows RuvC to scan DNA until it finds its consensus sequence, where it cleaves and resolves the cruciform DNA. This is Crossover junction endodeoxyribonuclease RuvC from Neisseria meningitidis serogroup C / serotype 2a (strain ATCC 700532 / DSM 15464 / FAM18).